A 199-amino-acid polypeptide reads, in one-letter code: Prolactin-2 (199 aa).

3 cysteine pairs are disulfide-bonded: Cys-4–Cys-11, Cys-58–Cys-174, and Cys-191–Cys-199.

The protein belongs to the somatotropin/prolactin family.

Its subcellular location is the secreted. This chain is Prolactin-2, found in Crocodylus novaeguineae (Crocodile).